The following is a 303-amino-acid chain: tRNA pseudouridine synthase B (303 aa).

Residue Asp-47 is the Nucleophile of the active site.

It belongs to the pseudouridine synthase TruB family. Type 1 subfamily.

The catalysed reaction is uridine(55) in tRNA = pseudouridine(55) in tRNA. In terms of biological role, responsible for synthesis of pseudouridine from uracil-55 in the psi GC loop of transfer RNAs. The sequence is that of tRNA pseudouridine synthase B from Legionella pneumophila (strain Lens).